The sequence spans 199 residues: Oligoribonuclease (199 aa).

The Exonuclease domain maps to 5–170 (LVWIDCEMTG…ADIRESIREL (166 aa)). The active site involves Tyr127.

It belongs to the oligoribonuclease family.

It is found in the cytoplasm. Functionally, 3'-to-5' exoribonuclease specific for small oligoribonucleotides. The protein is Oligoribonuclease of Rhodococcus jostii (strain RHA1).